Consider the following 397-residue polypeptide: Succinate--CoA ligase [ADP-forming] subunit beta (397 aa).

The ATP-grasp domain maps to 9–254 (KALLKSFGAP…ETEQDAKELE (246 aa)). Residues K46, 53 to 55 (GRG), E109, A112, and E117 contribute to the ATP site. N209 and D223 together coordinate Mg(2+). Substrate is bound by residues N274 and 331 to 333 (GIM).

It belongs to the succinate/malate CoA ligase beta subunit family. Heterotetramer of two alpha and two beta subunits. Mg(2+) serves as cofactor.

It carries out the reaction succinate + ATP + CoA = succinyl-CoA + ADP + phosphate. It catalyses the reaction GTP + succinate + CoA = succinyl-CoA + GDP + phosphate. Its pathway is carbohydrate metabolism; tricarboxylic acid cycle; succinate from succinyl-CoA (ligase route): step 1/1. In terms of biological role, succinyl-CoA synthetase functions in the citric acid cycle (TCA), coupling the hydrolysis of succinyl-CoA to the synthesis of either ATP or GTP and thus represents the only step of substrate-level phosphorylation in the TCA. The beta subunit provides nucleotide specificity of the enzyme and binds the substrate succinate, while the binding sites for coenzyme A and phosphate are found in the alpha subunit. In Hyphomonas neptunium (strain ATCC 15444), this protein is Succinate--CoA ligase [ADP-forming] subunit beta.